A 185-amino-acid polypeptide reads, in one-letter code: Ribosome-recycling factor (185 aa).

The protein belongs to the RRF family.

Its subcellular location is the cytoplasm. Its function is as follows. Responsible for the release of ribosomes from messenger RNA at the termination of protein biosynthesis. May increase the efficiency of translation by recycling ribosomes from one round of translation to another. The polypeptide is Ribosome-recycling factor (Klebsiella pneumoniae (strain 342)).